A 144-amino-acid chain; its full sequence is 3-hydroxyacyl-[acyl-carrier-protein] dehydratase FabZ (144 aa).

Residue His-47 is part of the active site.

Belongs to the thioester dehydratase family. FabZ subfamily.

It is found in the cytoplasm. The enzyme catalyses a (3R)-hydroxyacyl-[ACP] = a (2E)-enoyl-[ACP] + H2O. Involved in unsaturated fatty acids biosynthesis. Catalyzes the dehydration of short chain beta-hydroxyacyl-ACPs and long chain saturated and unsaturated beta-hydroxyacyl-ACPs. The polypeptide is 3-hydroxyacyl-[acyl-carrier-protein] dehydratase FabZ (Dechloromonas aromatica (strain RCB)).